Here is a 171-residue protein sequence, read N- to C-terminus: Endoribonuclease YbeY (171 aa).

Residues His-115, His-119, and His-125 each contribute to the Zn(2+) site.

The protein belongs to the endoribonuclease YbeY family. Requires Zn(2+) as cofactor.

The protein resides in the cytoplasm. In terms of biological role, single strand-specific metallo-endoribonuclease involved in late-stage 70S ribosome quality control and in maturation of the 3' terminus of the 16S rRNA. This is Endoribonuclease YbeY from Tropheryma whipplei (strain TW08/27) (Whipple's bacillus).